We begin with the raw amino-acid sequence, 243 residues long: Pyridoxine 5'-phosphate synthase (243 aa).

A 3-amino-2-oxopropyl phosphate-binding site is contributed by asparagine 7. 9–10 (DH) lines the 1-deoxy-D-xylulose 5-phosphate pocket. Arginine 18 contacts 3-amino-2-oxopropyl phosphate. Histidine 43 acts as the Proton acceptor in catalysis. Arginine 45 and histidine 50 together coordinate 1-deoxy-D-xylulose 5-phosphate. Glutamate 70 (proton acceptor) is an active-site residue. Position 100 (threonine 100) interacts with 1-deoxy-D-xylulose 5-phosphate. Catalysis depends on histidine 191, which acts as the Proton donor. 3-amino-2-oxopropyl phosphate is bound by residues glycine 192 and 213 to 214 (GH).

It belongs to the PNP synthase family. As to quaternary structure, homooctamer; tetramer of dimers.

The protein resides in the cytoplasm. It carries out the reaction 3-amino-2-oxopropyl phosphate + 1-deoxy-D-xylulose 5-phosphate = pyridoxine 5'-phosphate + phosphate + 2 H2O + H(+). It functions in the pathway cofactor biosynthesis; pyridoxine 5'-phosphate biosynthesis; pyridoxine 5'-phosphate from D-erythrose 4-phosphate: step 5/5. Functionally, catalyzes the complicated ring closure reaction between the two acyclic compounds 1-deoxy-D-xylulose-5-phosphate (DXP) and 3-amino-2-oxopropyl phosphate (1-amino-acetone-3-phosphate or AAP) to form pyridoxine 5'-phosphate (PNP) and inorganic phosphate. The sequence is that of Pyridoxine 5'-phosphate synthase from Magnetococcus marinus (strain ATCC BAA-1437 / JCM 17883 / MC-1).